The sequence spans 187 residues: Biphenyl 2,3-dioxygenase subunit beta (187 aa).

The protein belongs to the bacterial ring-hydroxylating dioxygenase beta subunit family. As to quaternary structure, heterohexamer consisting of three BphA1 subunits and three BphA2 subunits. The multicomponent biphenyl dioxygenase system is composed of a ferredoxin reductase (BphA4), a ferredoxin (BphA3), and a terminal oxygenase (BphA1A2).

It catalyses the reaction biphenyl + NADH + O2 + H(+) = (2R,3S)-3-phenylcyclohexa-3,5-diene-1,2-diol + NAD(+). Its pathway is xenobiotic degradation; biphenyl degradation; 2-hydroxy-2,4-pentadienoate and benzoate from biphenyl: step 1/4. Part of the oxygenase component of the biphenyl dioxygenase system that catalyzes the stereospecific dihydroxylation of the aromatic ring of biphenyl, yielding a dihydrodiol compound. Is likely involved in biphenyl degradation that allows growth of Rhodococcus sp. strain RHA1 on biphenyl as the sole source of carbon and energy. Can also use naphtalene and 4-chlorobiphenyl (4-CB) as substrates, as well as some polychlorinated biphenyls (PCB) such as 2,2'-dichlorobiphenyl, 2,3-dichlorobiphenyl and 2,5,2'-trichlorobiphenyl. Exhibits weak activity toward dibenzofuran and dibenzo-p-dioxin. Electrons are transferred from NADH to the [2Fe-2S] cluster in BphA1 via FAD of BphA4 and [2Fe-2S] cluster of BphA3. This chain is Biphenyl 2,3-dioxygenase subunit beta, found in Rhodococcus jostii (strain RHA1).